An 85-amino-acid chain; its full sequence is Large ribosomal subunit protein bL27 (85 aa).

A disordered region spans residues 1 to 22; that stretch reads MAHKKGGGSSRNGRDSNAQRRG.

This sequence belongs to the bacterial ribosomal protein bL27 family.

The protein is Large ribosomal subunit protein bL27 of Sorangium cellulosum (strain So ce56) (Polyangium cellulosum (strain So ce56)).